The sequence spans 102 residues: PqqA binding protein (102 aa).

Belongs to the PqqD family. In terms of assembly, monomer. Interacts with PqqE.

The protein operates within cofactor biosynthesis; pyrroloquinoline quinone biosynthesis. Functions as a PqqA binding protein and presents PqqA to PqqE, in the pyrroloquinoline quinone (PQQ) biosynthetic pathway. The polypeptide is PqqA binding protein (Rhodopseudomonas palustris (strain BisB5)).